Here is a 247-residue protein sequence, read N- to C-terminus: 3,4-dihydroxy-2-butanone 4-phosphate synthase (247 aa).

D-ribulose 5-phosphate is bound by residues 38 to 39, aspartate 43, 179 to 183, and glutamate 203; these read RE and RMGQT. Glutamate 39 contacts Mg(2+).

The protein belongs to the DHBP synthase family. As to quaternary structure, homodimer. The cofactor is Mg(2+). Mn(2+) serves as cofactor.

The enzyme catalyses D-ribulose 5-phosphate = (2S)-2-hydroxy-3-oxobutyl phosphate + formate + H(+). It functions in the pathway cofactor biosynthesis; riboflavin biosynthesis; 2-hydroxy-3-oxobutyl phosphate from D-ribulose 5-phosphate: step 1/1. Functionally, catalyzes the conversion of D-ribulose 5-phosphate to formate and 3,4-dihydroxy-2-butanone 4-phosphate. This chain is 3,4-dihydroxy-2-butanone 4-phosphate synthase, found in Methanosarcina mazei (strain ATCC BAA-159 / DSM 3647 / Goe1 / Go1 / JCM 11833 / OCM 88) (Methanosarcina frisia).